A 442-amino-acid polypeptide reads, in one-letter code: Trigger factor (442 aa).

The 86-residue stretch at 163-248 (YDRVTINYCI…IIKIEKKQEL (86 aa)) folds into the PPIase FKBP-type domain.

It belongs to the FKBP-type PPIase family. Tig subfamily.

It is found in the cytoplasm. The catalysed reaction is [protein]-peptidylproline (omega=180) = [protein]-peptidylproline (omega=0). Functionally, involved in protein export. Acts as a chaperone by maintaining the newly synthesized protein in an open conformation. Functions as a peptidyl-prolyl cis-trans isomerase. The polypeptide is Trigger factor (Buchnera aphidicola subsp. Acyrthosiphon pisum (strain 5A)).